The sequence spans 202 residues: Probable WRKY transcription factor 59 (202 aa).

The WRKY DNA-binding region spans 103–168 (DEKVALDDGY…YEGRHNHPSP (66 aa)).

The protein belongs to the WRKY group II-c family.

It is found in the nucleus. Functionally, transcription factor. Interacts specifically with the W box (5'-(T)TGAC[CT]-3'), a frequently occurring elicitor-responsive cis-acting element. In Arabidopsis thaliana (Mouse-ear cress), this protein is Probable WRKY transcription factor 59 (WRKY59).